We begin with the raw amino-acid sequence, 88 residues long: Sec-independent protein translocase protein TatA (88 aa).

A helical transmembrane segment spans residues methionine 1–glycine 21. Residues lysine 41–glycine 88 form a disordered region. Positions aspartate 46 to lysine 56 are enriched in polar residues. Residues lysine 76 to glycine 88 show a composition bias toward basic and acidic residues.

It belongs to the TatA/E family. The Tat system comprises two distinct complexes: a TatABC complex, containing multiple copies of TatA, TatB and TatC subunits, and a separate TatA complex, containing only TatA subunits. Substrates initially bind to the TatABC complex, which probably triggers association of the separate TatA complex to form the active translocon.

It is found in the cell inner membrane. Functionally, part of the twin-arginine translocation (Tat) system that transports large folded proteins containing a characteristic twin-arginine motif in their signal peptide across membranes. TatA could form the protein-conducting channel of the Tat system. The protein is Sec-independent protein translocase protein TatA of Yersinia pestis.